The following is a 477-amino-acid chain: MLRWLRGFVLPTAACQDVEPPTRYETLFQKLDRNGDGVVDISELQEGLKSLGIPLGQDAEEKIFTTGDVNKDGKLDFEEFMKYLKDHEKKMKLAFKSLDKNNDGKIEASEIVQSLQILGLTISEQQAELILQSIDADGTMTVDWNEWRDYFLFNPVTDIEEIIRFWKHSTGIDIGDSLTIPDEFTEDEKKSGQWWRQLLAGGVAGAVSRTSTAPLDRLKVMMQVHGSKSAKMNIYGGFQQMVKEGGIRSLWRGNGTNVIKIAPETAVKFWAYEQYKKLLTEEGQKIGTFERFVSGSMAGATAQTFIYPMEVLKTRLAVGKTGQYSGMFDCAKKILKYEGMGAFYKGYVPNLLGIIPYAGIDLAVYELLKSHWLDNFAKDSVNPGVMVLLGCGALSSTCGQLASYPLALVRTRMQAQAMIEKSPQLNMVGLFRRILSKEGLPGLYRGITPNFMKVLPAVGISYVVYENMKQTLGVTQK.

The interval 1 to 173 (MLRWLRGFVL…RFWKHSTGID (173 aa)) is regulatory N-terminal domain. Residues 1–197 (MLRWLRGFVL…EKKSGQWWRQ (197 aa)) lie on the Mitochondrial intermembrane side of the membrane. EF-hand domains follow at residues 19–54 (EPPT…LGIP), 61–85 (EKIF…KYLK), 86–121 (DHEK…LGLT), and 122–157 (ISEQ…NPVT). Positions 32, 34, 36, 38, 43, 68, 70, 72, 74, 79, 99, 101, 103, 105, 110, 135, 137, 139, 141, and 146 each coordinate Ca(2+). Positions 159–168 (IEEIIRFWKH) are linker region. Residues 174-477 (IGDSLTIPDE…MKQTLGVTQK (304 aa)) are C-terminal transmembrane transporter domain. Solcar repeat units lie at residues 192–278 (GQWW…YKKL), 286–371 (IGTF…LKSH), and 383–471 (PGVM…MKQT). Residues 198-215 (LLAGGVAGAVSRTSTAPL) traverse the membrane as a helical segment. At 216–252 (DRLKVMMQVHGSKSAKMNIYGGFQQMVKEGGIRSLWR) the chain is on the mitochondrial matrix side. The chain crosses the membrane as a helical span at residues 253–272 (GNGTNVIKIAPETAVKFWAY). The Mitochondrial intermembrane portion of the chain corresponds to 273–295 (EQYKKLLTEEGQKIGTFERFVSG). Residues 296–309 (SMAGATAQTFIYPM) traverse the membrane as a helical segment. Residues 310–345 (EVLKTRLAVGKTGQYSGMFDCAKKILKYEGMGAFYK) lie on the Mitochondrial matrix side of the membrane. An N6-acetyllysine; alternate modification is found at lysine 320. Lysine 320 bears the N6-succinyllysine; alternate mark. Lysine 336 carries the post-translational modification N6-acetyllysine. Residues 346–365 (GYVPNLLGIIPYAGIDLAVY) traverse the membrane as a helical segment. Over 366-388 (ELLKSHWLDNFAKDSVNPGVMVL) the chain is Mitochondrial intermembrane. Residues 389-406 (LGCGALSSTCGQLASYPL) traverse the membrane as a helical segment. The Mitochondrial matrix segment spans residues 407–445 (ALVRTRMQAQAMIEKSPQLNMVGLFRRILSKEGLPGLYR). Lysine 437 is subject to N6-acetyllysine; alternate. Lysine 437 carries the N6-succinyllysine; alternate modification. A helical transmembrane segment spans residues 446 to 465 (GITPNFMKVLPAVGISYVVY). Topologically, residues 466-477 (ENMKQTLGVTQK) are mitochondrial intermembrane.

The protein belongs to the mitochondrial carrier (TC 2.A.29) family. In terms of assembly, monomer.

It localises to the mitochondrion inner membrane. It catalyses the reaction Mg(2+)(out) + phosphate(in) + ATP(out) = Mg(2+)(in) + phosphate(out) + ATP(in). The catalysed reaction is ADP(out) + phosphate(in) + H(+)(out) = ADP(in) + phosphate(out) + H(+)(in). The enzyme catalyses AMP(out) + phosphate(in) = AMP(in) + phosphate(out). It carries out the reaction phosphate(in) + ATP(out) + 2 H(+)(out) = phosphate(out) + ATP(in) + 2 H(+)(in). It catalyses the reaction dADP(in) + ADP(out) = dADP(out) + ADP(in). The catalysed reaction is Mg(2+)(in) + ADP(out) + ATP(in) + H(+)(out) = Mg(2+)(out) + ADP(in) + ATP(out) + H(+)(in). The enzyme catalyses ADP(out) + diphosphate(in) = ADP(in) + diphosphate(out). It carries out the reaction dAMP(in) + ADP(out) + H(+)(out) = dAMP(out) + ADP(in) + H(+)(in). It catalyses the reaction 3'-AMP(in) + ADP(out) + H(+)(out) = 3'-AMP(out) + ADP(in) + H(+)(in). The catalysed reaction is dAMP(out) + phosphate(in) = dAMP(in) + phosphate(out). The enzyme catalyses 3'-AMP(out) + phosphate(in) = 3'-AMP(in) + phosphate(out). It carries out the reaction dADP(out) + phosphate(in) + H(+)(out) = dADP(in) + phosphate(out) + H(+)(in). Its activity is regulated as follows. Activated by an increase in cytosolic calcium levels that induce a conformational change of the N-terminal regulatory domain, uncapping the channel and allowing transport. Inhibited by bathophenanthroline, mersalyl, p-hydroxymercuribenzoate, bromcresol purple and tannic acid. In terms of biological role, electroneutral antiporter that mediates the transport of adenyl nucleotides through the inner mitochondrial membrane. Originally identified as an ATP-magnesium/inorganic phosphate antiporter, it also acts as a broad specificity adenyl nucleotide antiporter. By regulating the mitochondrial matrix adenyl nucleotide pool could adapt to changing cellular energetic demands and indirectly regulate adenyl nucleotide-dependent metabolic pathways. In vitro, a low activity is also observed with guanyl and pyrimidine nucleotides. May play a role in protecting cells against oxidative stress-induced cell death, by buffering calcium levels in the mitochondrial matrix through the formation of calcium-phosphate precipitates. The polypeptide is Mitochondrial adenyl nucleotide antiporter SLC25A24 (SLC25A24) (Bos taurus (Bovine)).